Consider the following 328-residue polypeptide: Alanine racemase (328 aa).

Lysine 33 functions as the Proton acceptor; specific for D-alanine in the catalytic mechanism. Lysine 33 carries the post-translational modification N6-(pyridoxal phosphate)lysine. Arginine 118 serves as a coordination point for substrate. Tyrosine 237 serves as the catalytic Proton acceptor; specific for L-alanine. Methionine 283 serves as a coordination point for substrate.

It belongs to the alanine racemase family. Pyridoxal 5'-phosphate serves as cofactor.

It carries out the reaction L-alanine = D-alanine. The protein operates within amino-acid biosynthesis; D-alanine biosynthesis; D-alanine from L-alanine: step 1/1. Catalyzes the interconversion of L-alanine and D-alanine. May also act on other amino acids. The sequence is that of Alanine racemase (alr) from Campylobacter jejuni subsp. jejuni serotype O:6 (strain 81116 / NCTC 11828).